The following is a 640-amino-acid chain: Envelope glycoprotein (640 aa).

Residues 1-32 (MEGPAFSKPLKDKINPWGPLIILGILIRAGVS) form the signal peptide. Residues 33–582 (VQHDSPHQVF…FNKSPWFTTL (550 aa)) lie on the Extracellular side of the membrane. Asparagine 43 and asparagine 58 each carry an N-linked (GlcNAc...) asparagine; by host glycan. 2 disulfides stabilise this stretch: cysteine 109–cysteine 126 and cysteine 118–cysteine 131. Asparagine 297 is a glycosylation site (N-linked (GlcNAc...) asparagine; by host). Disulfide bonds link cysteine 307–cysteine 310, cysteine 307–cysteine 535, cysteine 337–cysteine 391, cysteine 356–cysteine 368, cysteine 398–cysteine 411, and cysteine 527–cysteine 534. Residues 307 to 310 (CWLC) carry the CXXC motif. 2 N-linked (GlcNAc...) asparagine; by host glycosylation sites follow: asparagine 329 and asparagine 336. Residue asparagine 369 is glycosylated (N-linked (GlcNAc...) asparagine; by host). Positions 444–464 (VSLTLALLLGGLTMGGIAAGV) are fusion peptide. The stretch at 473–509 (ATQQFQQLQAAMHDDLKEVEKSITNLEKSLTSLSEVV) forms a coiled coil. Residues 510 to 526 (LQNRRGLDLLFLKEGGL) are immunosuppression. Residues 527-535 (CAALKEECC) carry the CX6CC motif. A helical membrane pass occupies residues 583-603 (ISTIMGPLIILLLILLFGPWI). Residues 604–640 (LNRLVQFIKDRISVVQALVLTQQYHQLKTIGDCKSRE) lie on the Cytoplasmic side of the membrane. The YXXL motif; contains endocytosis signal motif lies at 627–630 (YHQL).

In terms of assembly, the mature envelope protein (Env) consists of a trimer of SU-TM heterodimers attached by a labile interchain disulfide bond. Post-translationally, specific enzymatic cleavages in vivo yield mature proteins. Envelope glycoproteins are synthesized as an inactive precursor that is N-glycosylated and processed likely by host cell furin or by a furin-like protease in the Golgi to yield the mature SU and TM proteins. The cleavage site between SU and TM requires the minimal sequence [KR]-X-[KR]-R. The R-peptide is released from the C-terminus of the cytoplasmic tail of the TM protein upon particle formation as a result of proteolytic cleavage by the viral protease. Cleavage of this peptide is required for TM to become fusogenic. In terms of processing, the CXXC motif is highly conserved across a broad range of retroviral envelope proteins. It is thought to participate in the formation of a labile disulfide bond possibly with the CX6CC motif present in the transmembrane protein. Isomerization of the intersubunit disulfide bond to an SU intrachain disulfide bond is thought to occur upon receptor recognition in order to allow membrane fusion. The R-peptide is palmitoylated.

Its subcellular location is the virion membrane. The protein localises to the host cell membrane. The surface protein (SU) attaches the virus to the host cell by binding to its receptor. This interaction triggers the refolding of the transmembrane protein (TM) and is thought to activate its fusogenic potential by unmasking its fusion peptide. Fusion occurs at the host cell plasma membrane. Functionally, the transmembrane protein (TM) acts as a class I viral fusion protein. Under the current model, the protein has at least 3 conformational states: pre-fusion native state, pre-hairpin intermediate state, and post-fusion hairpin state. During viral and target cell membrane fusion, the coiled coil regions (heptad repeats) assume a trimer-of-hairpins structure, positioning the fusion peptide in close proximity to the C-terminal region of the ectodomain. The formation of this structure appears to drive apposition and subsequent fusion of viral and target cell membranes. Membranes fusion leads to delivery of the nucleocapsid into the cytoplasm. The polypeptide is Envelope glycoprotein (env) (Mus musculus (Mouse)).